The primary structure comprises 265 residues: Phosphonates import ATP-binding protein PhnC 1 (265 aa).

Residues 3-247 (LRLSAIELRH…HLDTLYANEQ (245 aa)) form the ABC transporter domain. 36-43 (GPSGAGKT) serves as a coordination point for ATP.

The protein belongs to the ABC transporter superfamily. Phosphonates importer (TC 3.A.1.9.1) family. In terms of assembly, the complex is composed of two ATP-binding proteins (PhnC), two transmembrane proteins (PhnE) and a solute-binding protein (PhnD).

The protein localises to the cell inner membrane. It carries out the reaction phosphonate(out) + ATP + H2O = phosphonate(in) + ADP + phosphate + H(+). Functionally, part of the ABC transporter complex PhnCDE involved in phosphonates import. Responsible for energy coupling to the transport system. In Pseudomonas syringae pv. syringae (strain B728a), this protein is Phosphonates import ATP-binding protein PhnC 1.